The primary structure comprises 413 residues: Serine hydroxymethyltransferase (413 aa).

Residues L116 and 120–122 contribute to the (6S)-5,6,7,8-tetrahydrofolate site; that span reads GHL. K225 carries the N6-(pyridoxal phosphate)lysine modification. A (6S)-5,6,7,8-tetrahydrofolate-binding site is contributed by 349–351; it reads SPF.

Belongs to the SHMT family. As to quaternary structure, homodimer. Pyridoxal 5'-phosphate is required as a cofactor.

The protein localises to the cytoplasm. The enzyme catalyses (6R)-5,10-methylene-5,6,7,8-tetrahydrofolate + glycine + H2O = (6S)-5,6,7,8-tetrahydrofolate + L-serine. Its pathway is one-carbon metabolism; tetrahydrofolate interconversion. The protein operates within amino-acid biosynthesis; glycine biosynthesis; glycine from L-serine: step 1/1. In terms of biological role, catalyzes the reversible interconversion of serine and glycine with tetrahydrofolate (THF) serving as the one-carbon carrier. This reaction serves as the major source of one-carbon groups required for the biosynthesis of purines, thymidylate, methionine, and other important biomolecules. Also exhibits THF-independent aldolase activity toward beta-hydroxyamino acids, producing glycine and aldehydes, via a retro-aldol mechanism. This is Serine hydroxymethyltransferase from Levilactobacillus brevis (strain ATCC 367 / BCRC 12310 / CIP 105137 / JCM 1170 / LMG 11437 / NCIMB 947 / NCTC 947) (Lactobacillus brevis).